The chain runs to 918 residues: Hexokinase-1 (918 aa).

M1 is subject to N-acetylmethionine. The mitochondrial-binding peptide (MBP) stretch occupies residues 1–10; the sequence is MIAAQLLAYY. Hexokinase domains follow at residues 16–458 and 464–906; these read DDQV…MVTA and AEQH…LITA. Residues R30 and 84 to 89 contribute to the ATP site; that span reads DLGGSS. The tract at residues 73–207 is hexokinase small subdomain 1; that stretch reads DGSEKGDFIA…DYDANIVAVV (135 aa). 84-88 provides a ligand contact to D-glucose 6-phosphate; that stretch reads DLGGS. D-glucose is bound by residues S155, 172–173, and 208–209; these read TK and ND. The segment at 208-447 is hexokinase large subdomain 1; sequence NDTVGTMMTC…SDVRFLLSES (240 aa). D209 and T232 together coordinate D-glucose 6-phosphate. Residues N235, E260, and 291–294 each bind D-glucose; that span reads QLFE. S337 is subject to Phosphoserine. 413 to 415 is a binding site for D-glucose 6-phosphate; sequence DGS. 425 to 426 provides a ligand contact to ATP; it reads RR. D-glucose 6-phosphate-binding positions include T449, 532 to 536, and S603; that span reads DLGGT. The segment at 521–655 is hexokinase small subdomain 2; the sequence is DGTEHGDFLA…EFDLDVVAVV (135 aa). 532–537 is a binding site for ATP; it reads DLGGTN. D-glucose is bound by residues 620–621 and 656–657; these read TK and ND. Residues 656–895 form a hexokinase large subdomain 2 region; the sequence is NDTVGTMMTC…CTVSFLLSED (240 aa). D-glucose 6-phosphate is bound by residues D657 and T680. T680 lines the ATP pocket. D-glucose-binding residues include N683, E708, and E742. ATP-binding positions include 747 to 748, 784 to 788, and 863 to 867; these read GM, TKFLS, and TLYKL. D-glucose 6-phosphate is bound by residues 861–863 and S897; that span reads DGT.

It belongs to the hexokinase family. As to quaternary structure, monomer. Interacts with RABL2/RABL2A; binds preferentially to GTP-bound RABL2. Interacts with VDAC1. The HK1-VDAC1 complex interacts with ATF2. Interacts (via N-terminal spermatogenic cell-specific region) with PFKM (via C-terminus). Interacts with SMAD5. Expressed in flagella of epididymal sperm.

The protein resides in the mitochondrion outer membrane. It localises to the cytoplasm. It is found in the cytosol. It catalyses the reaction a D-hexose + ATP = a D-hexose 6-phosphate + ADP + H(+). It carries out the reaction D-fructose + ATP = D-fructose 6-phosphate + ADP + H(+). The enzyme catalyses D-glucose + ATP = D-glucose 6-phosphate + ADP + H(+). The catalysed reaction is D-mannose + ATP = D-mannose 6-phosphate + ADP + H(+). It catalyses the reaction D-glucosamine + ATP = D-glucosamine 6-phosphate + ADP + H(+). It participates in carbohydrate metabolism; hexose metabolism. It functions in the pathway carbohydrate degradation; glycolysis; D-glyceraldehyde 3-phosphate and glycerone phosphate from D-glucose: step 1/4. Hexokinase is an allosteric enzyme inhibited by its product D-glucose 6-phosphate. Hexokinase activity is inhibited by N-acetyl-D-glucosamine. Functionally, catalyzes the phosphorylation of various hexoses, such as D-glucose, D-glucosamine, D-fructose, D-mannose and 2-deoxy-D-glucose, to hexose 6-phosphate (D-glucose 6-phosphate, D-glucosamine 6-phosphate, D-fructose 6-phosphate, D-mannose 6-phosphate and 2-deoxy-D-glucose 6-phosphate, respectively). Mediates the initial step of glycolysis by catalyzing phosphorylation of D-glucose to D-glucose 6-phosphate. Involved in innate immunity and inflammation by acting as a pattern recognition receptor for bacterial peptidoglycan. When released in the cytosol, N-acetyl-D-glucosamine component of bacterial peptidoglycan inhibits the hexokinase activity of HK1 and causes its dissociation from mitochondrial outer membrane, thereby activating the NLRP3 inflammasome. This is Hexokinase-1 from Rattus norvegicus (Rat).